The following is a 157-amino-acid chain: Small ribosomal subunit protein uS7 (157 aa).

This sequence belongs to the universal ribosomal protein uS7 family. As to quaternary structure, part of the 30S ribosomal subunit. Contacts proteins S9 and S11.

Its function is as follows. One of the primary rRNA binding proteins, it binds directly to 16S rRNA where it nucleates assembly of the head domain of the 30S subunit. Is located at the subunit interface close to the decoding center, probably blocks exit of the E-site tRNA. The protein is Small ribosomal subunit protein uS7 of Pseudomonas fluorescens (strain Pf0-1).